Consider the following 727-residue polypeptide: Translation initiation factor IF-2, mitochondrial (727 aa).

A mitochondrion-targeting transit peptide spans 1-29 (MNQKLLKLENLLRFHTIYRQLHSLCQRRA). The tr-type G domain maps to 178–348 (PRSPVVTIMG…VALAEMLELK (171 aa)). Residues 187–194 (GHVDHGKT) form a G1 region. 187-194 (GHVDHGKT) provides a ligand contact to GTP. Residues 212–216 (GITQH) form a G2 region. Residues 234-237 (DTPG) and 288-291 (NKCD) each bind GTP. The interval 234-237 (DTPG) is G3. The segment at 288 to 291 (NKCD) is G4. Residues 324–326 (SAL) form a G5 region. The residue at position 688 (Thr-688) is a Phosphothreonine.

It belongs to the TRAFAC class translation factor GTPase superfamily. Classic translation factor GTPase family. IF-2 subfamily. Monomer. Expressed in all tissues examined. Highest level in skeletal muscle.

The protein resides in the mitochondrion. In terms of biological role, one of the essential components for the initiation of protein synthesis. Protects formylmethionyl-tRNA from spontaneous hydrolysis and promotes its binding to the 30S ribosomal subunits. Also involved in the hydrolysis of GTP during the formation of the 70S ribosomal complex. The polypeptide is Translation initiation factor IF-2, mitochondrial (MTIF2) (Homo sapiens (Human)).